The chain runs to 733 residues: Neutral ceramidase 3 (733 aa).

The N-terminal stretch at 1–25 is a signal peptide; sequence MTRWSMSMHCTLFLLFLLRLTCIFS. Residue S307 is the Nucleophile of the active site. N325 carries an N-linked (GlcNAc...) asparagine glycan.

This sequence belongs to the neutral ceramidase family.

Its subcellular location is the secreted. The protein localises to the endoplasmic reticulum. It localises to the golgi apparatus. The catalysed reaction is an N-acylsphing-4-enine + H2O = sphing-4-enine + a fatty acid. Functionally, hydrolyzes the sphingolipid ceramide into sphingosine and free fatty acid. Promotes oxidative stress resistance. This is Neutral ceramidase 3 from Arabidopsis thaliana (Mouse-ear cress).